A 150-amino-acid chain; its full sequence is Large ribosomal subunit protein bL9 (150 aa).

It belongs to the bacterial ribosomal protein bL9 family.

Its function is as follows. Binds to the 23S rRNA. This chain is Large ribosomal subunit protein bL9, found in Sodalis glossinidius (strain morsitans).